Consider the following 334-residue polypeptide: G2/mitotic-specific cyclin-1 (334 aa).

This sequence belongs to the cyclin family. Cyclin AB subfamily.

In terms of biological role, essential for the control of the cell cycle at the G2/M (mitosis) transition. The chain is G2/mitotic-specific cyclin-1 (CYC1) from Trypanosoma brucei brucei.